The primary structure comprises 214 residues: MTQDFGVYLVTGAEHSAGRSTAEVVEAAIRGGVDIVQLRDKTATARERYEVGTELRTLTRDAGVPLVVNDRLDLAAAIDADGVHLGDDDLPIEVAREQLGSDAIVGRSVSTPDAAREAEQAGADYLGVGAIYGTDSKDTDPEQSNIGLDRIRAVRDATSLPFVGIGGVTPDNAAPVVEAGADGVAVISAITAADDPEHATRRLADAVEGVAPNV.

Residues Gln37–Lys41 and Asn69 each bind 4-amino-2-methyl-5-(diphosphooxymethyl)pyrimidine. Asp70 and Asp89 together coordinate Mg(2+). Ser108 contacts 4-amino-2-methyl-5-(diphosphooxymethyl)pyrimidine. Thr134–Ser136 contributes to the 2-[(2R,5Z)-2-carboxy-4-methylthiazol-5(2H)-ylidene]ethyl phosphate binding site. A 4-amino-2-methyl-5-(diphosphooxymethyl)pyrimidine-binding site is contributed by Lys137. 2-[(2R,5Z)-2-carboxy-4-methylthiazol-5(2H)-ylidene]ethyl phosphate is bound by residues Gly167 and Ile187–Ser188.

The protein belongs to the thiamine-phosphate synthase family. Mg(2+) serves as cofactor.

It catalyses the reaction 2-[(2R,5Z)-2-carboxy-4-methylthiazol-5(2H)-ylidene]ethyl phosphate + 4-amino-2-methyl-5-(diphosphooxymethyl)pyrimidine + 2 H(+) = thiamine phosphate + CO2 + diphosphate. The enzyme catalyses 2-(2-carboxy-4-methylthiazol-5-yl)ethyl phosphate + 4-amino-2-methyl-5-(diphosphooxymethyl)pyrimidine + 2 H(+) = thiamine phosphate + CO2 + diphosphate. The catalysed reaction is 4-methyl-5-(2-phosphooxyethyl)-thiazole + 4-amino-2-methyl-5-(diphosphooxymethyl)pyrimidine + H(+) = thiamine phosphate + diphosphate. The protein operates within cofactor biosynthesis; thiamine diphosphate biosynthesis; thiamine phosphate from 4-amino-2-methyl-5-diphosphomethylpyrimidine and 4-methyl-5-(2-phosphoethyl)-thiazole: step 1/1. Condenses 4-methyl-5-(beta-hydroxyethyl)thiazole monophosphate (THZ-P) and 2-methyl-4-amino-5-hydroxymethyl pyrimidine pyrophosphate (HMP-PP) to form thiamine monophosphate (TMP). This chain is Thiamine-phosphate synthase, found in Natronomonas pharaonis (strain ATCC 35678 / DSM 2160 / CIP 103997 / JCM 8858 / NBRC 14720 / NCIMB 2260 / Gabara) (Halobacterium pharaonis).